A 733-amino-acid chain; its full sequence is Fibronectin type III domain-containing protein 7 (733 aa).

Residues 1–25 form the signal peptide; that stretch reads MAGGRETCLPLIGFILICLKMVASA. Fibronectin type-III domains are found at residues 28-115, 116-202, 203-288, 289-373, 374-459, 460-544, 545-632, and 631-715; these read APEI…TVLA, APIL…TSPR, APAN…TVAC, APGR…TAPC, CPSD…TAPC, SPEI…TVPC, CPTG…CCPL, and PLGV…YSVT. N230 carries an N-linked (GlcNAc...) asparagine glycan. A glycan (N-linked (GlcNAc...) asparagine) is linked at N433.

It is found in the secreted. The chain is Fibronectin type III domain-containing protein 7 (FNDC7) from Homo sapiens (Human).